A 539-amino-acid polypeptide reads, in one-letter code: GMP synthase [glutamine-hydrolyzing] (539 aa).

A Glutamine amidotransferase type-1 domain is found at 4 to 203 (KILILDFGSQ…VHDICGCKSD (200 aa)). The active-site Nucleophile is the Cys82. Catalysis depends on residues His177 and Glu179. A GMPS ATP-PPase domain is found at 204–395 (WNMPDYIAEA…LGLPHDMVYR (192 aa)). Residue 231-237 (SGGVDSS) coordinates ATP.

Homodimer.

It carries out the reaction XMP + L-glutamine + ATP + H2O = GMP + L-glutamate + AMP + diphosphate + 2 H(+). It participates in purine metabolism; GMP biosynthesis; GMP from XMP (L-Gln route): step 1/1. In terms of biological role, catalyzes the synthesis of GMP from XMP. The chain is GMP synthase [glutamine-hydrolyzing] from Herminiimonas arsenicoxydans.